The following is a 224-amino-acid chain: Peptidyl-prolyl cis-trans isomerase FKBP3 (224 aa).

Alanine 2 carries the post-translational modification N-acetylalanine. The residue at position 36 (serine 36) is a Phosphoserine. A disordered region spans residues 88–118 (VKLSDDKPKDSKSEETLDEGPPKYTKSILKK). Positions 89 to 102 (KLSDDKPKDSKSEE) are enriched in basic and acidic residues. N6-acetyllysine is present on lysine 99. The 97-residue stretch at 128-224 (GDVVHCWYTG…IFEVELVDID (97 aa)) folds into the PPIase FKBP-type domain. Serine 152 bears the Phosphoserine mark. N6-acetyllysine is present on lysine 170.

This sequence belongs to the FKBP-type PPIase family.

Its subcellular location is the nucleus. It catalyses the reaction [protein]-peptidylproline (omega=180) = [protein]-peptidylproline (omega=0). Its activity is regulated as follows. Inhibited preferentially by rapamycin over FK506. In terms of biological role, FK506- and rapamycin-binding proteins (FKBPs) constitute a family of receptors for the two immunosuppressants which inhibit T-cell proliferation by arresting two distinct cytoplasmic signal transmission pathways. PPIases accelerate the folding of proteins. This is Peptidyl-prolyl cis-trans isomerase FKBP3 (Fkbp3) from Mus musculus (Mouse).